Consider the following 198-residue polypeptide: Putative pseudouridine methyltransferase (198 aa).

S-adenosyl-L-methionine-binding residues include leucine 132 and cysteine 186.

This sequence belongs to the methyltransferase superfamily. TrmY family.

The protein resides in the cytoplasm. The protein is Putative pseudouridine methyltransferase of Shewanella frigidimarina (strain NCIMB 400).